The primary structure comprises 214 residues: ATP-dependent Clp protease proteolytic subunit (214 aa).

S113 acts as the Nucleophile in catalysis. H138 is an active-site residue.

It belongs to the peptidase S14 family. In terms of assembly, fourteen ClpP subunits assemble into 2 heptameric rings which stack back to back to give a disk-like structure with a central cavity, resembling the structure of eukaryotic proteasomes.

It is found in the cytoplasm. The enzyme catalyses Hydrolysis of proteins to small peptides in the presence of ATP and magnesium. alpha-casein is the usual test substrate. In the absence of ATP, only oligopeptides shorter than five residues are hydrolyzed (such as succinyl-Leu-Tyr-|-NHMec, and Leu-Tyr-Leu-|-Tyr-Trp, in which cleavage of the -Tyr-|-Leu- and -Tyr-|-Trp bonds also occurs).. Functionally, cleaves peptides in various proteins in a process that requires ATP hydrolysis. Has a chymotrypsin-like activity. Plays a major role in the degradation of misfolded proteins. This is ATP-dependent Clp protease proteolytic subunit from Alkalilimnicola ehrlichii (strain ATCC BAA-1101 / DSM 17681 / MLHE-1).